Here is a 141-residue protein sequence, read N- to C-terminus: MRLMGLDIGDRRIGVALTDENGVAAYPLEVLERTSPEKDLRRITEIIDQYGVERVVAGLPKTLSGQIGPQGDKVLSFLDKLRVRSTVPVITWDERLTTAEVEKLLVSADLGRRRRRKVVDKLAATLILNSYLNSRKSGRNT.

This sequence belongs to the YqgF nuclease family.

The protein resides in the cytoplasm. In terms of biological role, could be a nuclease involved in processing of the 5'-end of pre-16S rRNA. This Desulforudis audaxviator (strain MP104C) protein is Putative pre-16S rRNA nuclease.